The chain runs to 270 residues: Formamidopyrimidine-DNA glycosylase (270 aa).

The active-site Schiff-base intermediate with DNA is P2. Catalysis depends on E3, which acts as the Proton donor. K58 acts as the Proton donor; for beta-elimination activity in catalysis. Residues H91, R110, and R151 each coordinate DNA. The FPG-type zinc finger occupies 236 to 270 (AVYGREGEPCTHCGAPLQGVRIGGRATIYCSQCQR). Residue R260 is the Proton donor; for delta-elimination activity of the active site.

The protein belongs to the FPG family. In terms of assembly, monomer. Requires Zn(2+) as cofactor.

It catalyses the reaction Hydrolysis of DNA containing ring-opened 7-methylguanine residues, releasing 2,6-diamino-4-hydroxy-5-(N-methyl)formamidopyrimidine.. The enzyme catalyses 2'-deoxyribonucleotide-(2'-deoxyribose 5'-phosphate)-2'-deoxyribonucleotide-DNA = a 3'-end 2'-deoxyribonucleotide-(2,3-dehydro-2,3-deoxyribose 5'-phosphate)-DNA + a 5'-end 5'-phospho-2'-deoxyribonucleoside-DNA + H(+). In terms of biological role, involved in base excision repair of DNA damaged by oxidation or by mutagenic agents. Acts as a DNA glycosylase that recognizes and removes damaged bases. Has a preference for oxidized purines, such as 7,8-dihydro-8-oxoguanine (8-oxoG). Has AP (apurinic/apyrimidinic) lyase activity and introduces nicks in the DNA strand. Cleaves the DNA backbone by beta-delta elimination to generate a single-strand break at the site of the removed base with both 3'- and 5'-phosphates. This is Formamidopyrimidine-DNA glycosylase from Acidithiobacillus ferrooxidans (strain ATCC 23270 / DSM 14882 / CIP 104768 / NCIMB 8455) (Ferrobacillus ferrooxidans (strain ATCC 23270)).